The following is a 202-amino-acid chain: Orotate phosphoribosyltransferase (202 aa).

5-phospho-alpha-D-ribose 1-diphosphate contacts are provided by residues K93 and 113–121; that span reads EDIITTGGS. Orotate contacts are provided by T117 and R145.

The protein belongs to the purine/pyrimidine phosphoribosyltransferase family. PyrE subfamily. Homodimer. Requires Mg(2+) as cofactor.

The enzyme catalyses orotidine 5'-phosphate + diphosphate = orotate + 5-phospho-alpha-D-ribose 1-diphosphate. It participates in pyrimidine metabolism; UMP biosynthesis via de novo pathway; UMP from orotate: step 1/2. Functionally, catalyzes the transfer of a ribosyl phosphate group from 5-phosphoribose 1-diphosphate to orotate, leading to the formation of orotidine monophosphate (OMP). This chain is Orotate phosphoribosyltransferase, found in Campylobacter concisus (strain 13826).